A 132-amino-acid chain; its full sequence is Small ribosomal subunit protein uS11 (132 aa).

The protein belongs to the universal ribosomal protein uS11 family. As to quaternary structure, part of the 30S ribosomal subunit. Interacts with proteins S7 and S18. Binds to IF-3.

Located on the platform of the 30S subunit, it bridges several disparate RNA helices of the 16S rRNA. Forms part of the Shine-Dalgarno cleft in the 70S ribosome. This chain is Small ribosomal subunit protein uS11, found in Clostridioides difficile (strain 630) (Peptoclostridium difficile).